We begin with the raw amino-acid sequence, 340 residues long: Anthranilate phosphoribosyltransferase (340 aa).

5-phospho-alpha-D-ribose 1-diphosphate contacts are provided by residues G83, 86–87 (GD), T91, 93–96 (NIST), 111–119 (KHGNRSITS), and S123. Residue G83 coordinates anthranilate. Residue S95 participates in Mg(2+) binding. Anthranilate is bound at residue N114. R169 contacts anthranilate. Mg(2+) is bound by residues D228 and E229.

The protein belongs to the anthranilate phosphoribosyltransferase family. In terms of assembly, homodimer. Mg(2+) is required as a cofactor.

It carries out the reaction N-(5-phospho-beta-D-ribosyl)anthranilate + diphosphate = 5-phospho-alpha-D-ribose 1-diphosphate + anthranilate. It participates in amino-acid biosynthesis; L-tryptophan biosynthesis; L-tryptophan from chorismate: step 2/5. In terms of biological role, catalyzes the transfer of the phosphoribosyl group of 5-phosphorylribose-1-pyrophosphate (PRPP) to anthranilate to yield N-(5'-phosphoribosyl)-anthranilate (PRA). This Solibacter usitatus (strain Ellin6076) protein is Anthranilate phosphoribosyltransferase.